The following is a 386-amino-acid chain: Phosphoglycerate kinase (386 aa).

Residues 21 to 23 (DLN), arginine 36, 59 to 62 (HLGR), arginine 113, and arginine 146 each bind substrate. Residues lysine 197, glutamate 314, and 340-343 (GGDT) each bind ATP.

The protein belongs to the phosphoglycerate kinase family. Monomer.

The protein resides in the cytoplasm. It carries out the reaction (2R)-3-phosphoglycerate + ATP = (2R)-3-phospho-glyceroyl phosphate + ADP. It participates in carbohydrate degradation; glycolysis; pyruvate from D-glyceraldehyde 3-phosphate: step 2/5. This is Phosphoglycerate kinase from Vibrio vulnificus (strain CMCP6).